The sequence spans 191 residues: Small ribosomal subunit protein uS4A (191 aa).

Phosphoserine occurs at positions 50 and 161. The region spanning 107 to 181 (RRLQTQVFKL…CKRKRLRSQE (75 aa)) is the S4 RNA-binding domain. Tyr164 bears the Phosphotyrosine mark. The tract at residues 166-191 (GGRPGRCKRKRLRSQEGGEGEEAEEE) is disordered. Position 179 is a phosphoserine (Ser179).

It belongs to the universal ribosomal protein uS4 family. Component of the small ribosomal subunit (SSU). Mature yeast ribosomes consist of a small (40S) and a large (60S) subunit. The 40S small subunit contains 1 molecule of ribosomal RNA (18S rRNA) and at least 33 different proteins. The large 60S subunit contains 3 rRNA molecules (25S, 5.8S and 5S rRNA) and at least 46 different proteins. Interacts with snoRNA U3. uS11 interacts with MPP10. Component of the ribosomal small subunit (SSU) processome composed of at least 40 protein subunits and snoRNA U3.

It localises to the cytoplasm. Functionally, component of the ribosome, a large ribonucleoprotein complex responsible for the synthesis of proteins in the cell. The small ribosomal subunit (SSU) binds messenger RNAs (mRNAs) and translates the encoded message by selecting cognate aminoacyl-transfer RNA (tRNA) molecules. The large subunit (LSU) contains the ribosomal catalytic site termed the peptidyl transferase center (PTC), which catalyzes the formation of peptide bonds, thereby polymerizing the amino acids delivered by tRNAs into a polypeptide chain. The nascent polypeptides leave the ribosome through a tunnel in the LSU and interact with protein factors that function in enzymatic processing, targeting, and the membrane insertion of nascent chains at the exit of the ribosomal tunnel. uS4 is involved in nucleolar processing of pre-18S ribosomal RNA and ribosome assembly. This chain is Small ribosomal subunit protein uS4A (rps901), found in Schizosaccharomyces pombe (strain 972 / ATCC 24843) (Fission yeast).